A 119-amino-acid polypeptide reads, in one-letter code: MFKKNDRSQSRTRRHMRVRKKIFGTAERPRLSVYRSEKHIYAQLIDDVEGKTLVAASSSEKGFDGVGSNKEGAKLVGKMVAEKALEKGLKKVVFDRGGFIYHGRIKELAEGAREAGLDF.

Belongs to the universal ribosomal protein uL18 family. Part of the 50S ribosomal subunit; part of the 5S rRNA/L5/L18/L25 subcomplex. Contacts the 5S and 23S rRNAs.

Functionally, this is one of the proteins that bind and probably mediate the attachment of the 5S RNA into the large ribosomal subunit, where it forms part of the central protuberance. This is Large ribosomal subunit protein uL18 from Clostridium botulinum (strain ATCC 19397 / Type A).